The chain runs to 400 residues: CCA-adding enzyme (400 aa).

The ATP site is built by Gly28 and Arg31. CTP contacts are provided by Gly28 and Arg31. 2 residues coordinate Mg(2+): Asp41 and Asp43. ATP-binding residues include Arg112, Asp155, Arg158, Arg161, and Arg164. Residues Arg112, Asp155, Arg158, Arg161, and Arg164 each contribute to the CTP site.

The protein belongs to the tRNA nucleotidyltransferase/poly(A) polymerase family. Bacterial CCA-adding enzyme type 3 subfamily. In terms of assembly, homodimer. Mg(2+) serves as cofactor.

It catalyses the reaction a tRNA precursor + 2 CTP + ATP = a tRNA with a 3' CCA end + 3 diphosphate. The catalysed reaction is a tRNA with a 3' CCA end + 2 CTP + ATP = a tRNA with a 3' CCACCA end + 3 diphosphate. Catalyzes the addition and repair of the essential 3'-terminal CCA sequence in tRNAs without using a nucleic acid template. Adds these three nucleotides in the order of C, C, and A to the tRNA nucleotide-73, using CTP and ATP as substrates and producing inorganic pyrophosphate. tRNA 3'-terminal CCA addition is required both for tRNA processing and repair. Also involved in tRNA surveillance by mediating tandem CCA addition to generate a CCACCA at the 3' terminus of unstable tRNAs. While stable tRNAs receive only 3'-terminal CCA, unstable tRNAs are marked with CCACCA and rapidly degraded. This Staphylococcus aureus (strain MRSA252) protein is CCA-adding enzyme.